Here is a 776-residue protein sequence, read N- to C-terminus: Endonuclease MutS2 (776 aa).

330-337 (GPNTGGKT) provides a ligand contact to ATP. Residues 701–776 (LDLRGMRYEE…GSGATIAILK (76 aa)) form the Smr domain.

Belongs to the DNA mismatch repair MutS family. MutS2 subfamily. Homodimer. Binds to stalled ribosomes, contacting rRNA.

Endonuclease that is involved in the suppression of homologous recombination and thus may have a key role in the control of bacterial genetic diversity. In terms of biological role, acts as a ribosome collision sensor, splitting the ribosome into its 2 subunits. Detects stalled/collided 70S ribosomes which it binds and splits by an ATP-hydrolysis driven conformational change. Acts upstream of the ribosome quality control system (RQC), a ribosome-associated complex that mediates the extraction of incompletely synthesized nascent chains from stalled ribosomes and their subsequent degradation. Probably generates substrates for RQC. This chain is Endonuclease MutS2, found in Lactococcus lactis subsp. cremoris (strain MG1363).